The following is a 150-amino-acid chain: Group IIC secretory phospholipase A2 (150 aa).

The N-terminal stretch at 1–20 is a signal peptide; that stretch reads MKGIAIFLVFIFYWTTSTLS. Intrachain disulfides connect Cys46/Cys143, Cys48/Cys64, Cys63/Cys121, Cys69/Cys150, Cys70/Cys114, Cys79/Cys107, Cys97/Cys112, and Cys99/Cys105. Residues Tyr47, Gly49, and Gly51 each coordinate Ca(2+). Residue His67 is part of the active site. Residue Asp68 coordinates Ca(2+). Asn92 carries N-linked (GlcNAc...) asparagine glycosylation. Asp115 is an active-site residue.

The protein belongs to the phospholipase A2 family. Requires Ca(2+) as cofactor. In terms of tissue distribution, testis specific.

It is found in the secreted. The catalysed reaction is a 1,2-diacyl-sn-glycero-3-phosphocholine + H2O = a 1-acyl-sn-glycero-3-phosphocholine + a fatty acid + H(+). Its function is as follows. PA2 catalyzes the calcium-dependent hydrolysis of the 2-acyl groups in 3-sn-phosphoglycerides. Testis PA2 may be important in the production of prostaglandins, by the release of arachidonic acid, which in turn are necessary for the contractions of the seminiferous tubules and the testicular capsule; they also seem to decrease sperm transit time through the male reproductive tract. The sequence is that of Group IIC secretory phospholipase A2 (Pla2g2c) from Mus musculus (Mouse).